We begin with the raw amino-acid sequence, 967 residues long: uncharacterized protein (967 aa).

2 disordered regions span residues 1 to 23 (MQNA…FHDR) and 41 to 72 (FTMH…DPRT). Basic and acidic residues predominate over residues 14–23 (KGRDVNFHDR). The segment covering 60-72 (RLSNYSSAVDPRT) has biased composition (polar residues). S86 bears the Phosphoserine mark. Disordered stretches follow at residues 135-259 (AVSE…QHLP), 271-296 (SVSR…SPPE), 380-399 (DSTT…APHK), 437-464 (HSYG…FVAD), and 499-544 (GTRF…KSLS). Residues 162–187 (ESSTSNNLETGNSTNTALHNVSSPLE) show a composition bias toward polar residues. Basic and acidic residues predominate over residues 205-218 (HDLDEVISEKDTSL). Basic residues predominate over residues 221–234 (RSSRGRSSAPKRRK). Residues 278-294 (SPASTPRSSVSSVSSSP) are compositionally biased toward low complexity. Residues 382–394 (TTEYVNTESSSKT) are compositionally biased toward polar residues. The span at 499-508 (GTRFHSRSSH) shows a compositional bias: basic residues. S585 is subject to Phosphoserine. Disordered regions lie at residues 594–665 (ESNE…SVND) and 681–708 (DHRI…ESQH). Over residues 608 to 622 (YDSRESTGHTIKELR) the composition is skewed to basic and acidic residues. Residues 686–704 (ASDNQNNNNNDANALAENS) show a composition bias toward low complexity. 728-736 (PCVLDVKMG) lines the substrate pocket.

It belongs to the inositol phosphokinase (IPK) family.

It is found in the cytoplasm. This is an uncharacterized protein from Schizosaccharomyces pombe (strain 972 / ATCC 24843) (Fission yeast).